Consider the following 138-residue polypeptide: Large ribosomal subunit protein uL16 (138 aa).

Belongs to the universal ribosomal protein uL16 family. Part of the 50S ribosomal subunit.

Functionally, binds 23S rRNA and is also seen to make contacts with the A and possibly P site tRNAs. In Nitrosomonas europaea (strain ATCC 19718 / CIP 103999 / KCTC 2705 / NBRC 14298), this protein is Large ribosomal subunit protein uL16.